Here is a 331-residue protein sequence, read N- to C-terminus: T-cell acute lymphocytic leukemia protein 1 (331 aa).

Residues 1–22 (MTERPPSEAARSDPQLEGRDAA) show a composition bias toward basic and acidic residues. Disordered regions lie at residues 1 to 27 (MTERPPSEAARSDPQLEGRDAAEASMA) and 40 to 86 (ETSR…EARH). Position 12 is a phosphoserine (Ser12). Over residues 56-70 (ARGGPGGGPAGGGGA) the composition is skewed to gly residues. Residues 72-86 (RDLKGRDAATAEARH) are compositionally biased toward basic and acidic residues. Phosphoserine occurs at positions 122 and 172. Positions 187–239 (VRRIFTNSRERWRQQNVNGAFAELRKLIPTHPPDKKLSKNEILRLAMKYINFL) constitute a bHLH domain. The interval 249 to 331 (EGTQRAKTGK…LPAADGAGPR (83 aa)) is disordered. Positions 263–275 (GAGGGGGGGGGGA) are enriched in gly residues.

Efficient DNA binding requires dimerization with another bHLH protein. Forms heterodimers with TCF3. Binds to the LIM domain containing protein LMO2 and to DRG1. Can assemble in a complex with LDB1 and LMO2. Component of a TAL-1 complex composed at least of CBFA2T3, LDB1, TAL1 and TCF3. Interacts with SBNO2; this interaction inhibits TAL1 occupancy of the DCSTAMP promoter, leading to the activation of the DCSTAMP promoter by the transcription factor MITF. In terms of processing, phosphorylated on serine residues. Phosphorylation of Ser-122 is strongly stimulated by hypoxia. Post-translationally, ubiquitinated; subsequent to hypoxia-dependent phosphorylation of Ser-122, ubiquitination targets the protein for rapid degradation via the ubiquitin system. This process may be characteristic for microvascular endothelial cells, since it could not be observed in large vessel endothelial cells. In terms of tissue distribution, leukemic stem cell.

It localises to the nucleus. Implicated in the genesis of hemopoietic malignancies. It may play an important role in hemopoietic differentiation. Serves as a positive regulator of erythroid differentiation. The polypeptide is T-cell acute lymphocytic leukemia protein 1 (TAL1) (Homo sapiens (Human)).